Consider the following 191-residue polypeptide: Protein YceI (191 aa).

The N-terminal stretch at 1-22 is a signal peptide; sequence MKKSLLGLTFASLMFSAGSAVA.

Belongs to the UPF0312 family. Type 1 subfamily.

The protein localises to the periplasm. This Escherichia coli O6:H1 (strain CFT073 / ATCC 700928 / UPEC) protein is Protein YceI.